We begin with the raw amino-acid sequence, 124 residues long: Fluoride-specific ion channel FluC (124 aa).

The next 4 helical transmembrane spans lie at 4 to 24, 35 to 55, 62 to 82, and 95 to 115; these read VLFV…ISLL, FGTL…FALG, PEFK…FSTF, and LVKA…VVYL. Na(+) is bound by residues G74 and T77.

Belongs to the fluoride channel Fluc/FEX (TC 1.A.43) family.

The protein localises to the cell inner membrane. It carries out the reaction fluoride(in) = fluoride(out). With respect to regulation, na(+) is not transported, but it plays an essential structural role and its presence is essential for fluoride channel function. In terms of biological role, fluoride-specific ion channel. Important for reducing fluoride concentration in the cell, thus reducing its toxicity. This Shewanella pealeana (strain ATCC 700345 / ANG-SQ1) protein is Fluoride-specific ion channel FluC.